The primary structure comprises 175 residues: Granulocyte colony-stimulating factor (175 aa).

Disulfide bonds link cysteine 37-cysteine 43 and cysteine 65-cysteine 75. The O-linked (GalNAc...) threonine glycan is linked to threonine 134.

This sequence belongs to the IL-6 superfamily. Monomer. Post-translationally, O-glycosylated.

The protein localises to the secreted. Functionally, granulocyte/macrophage colony-stimulating factors are cytokines that act in hematopoiesis by controlling the production, differentiation, and function of 2 related white cell populations of the blood, the granulocytes and the monocytes-macrophages. This CSF induces granulocytes. The chain is Granulocyte colony-stimulating factor (CSF3) from Canis lupus familiaris (Dog).